Reading from the N-terminus, the 51-residue chain is Magnetosome protein Mms5 (51 aa).

Over 1-8 (MLSAKGVS) the chain is Lumenal. An LG region region spans residues 9-16 (LGLGLGLG). The helical transmembrane segment at 9 to 29 (LGLGLGLGAWGPVLLGVVGVA) threads the bilayer. Over 30 to 51 (GALALYGYYKNRNAEPAAAEAV) the chain is Cytoplasmic.

The protein belongs to the magnetosome MamD/Mms5 family. Post-translationally, may undergo N-terminal cleavage.

The protein resides in the magnetosome membrane. Functionally, might be involved in magnetite crystal growth. The polypeptide is Magnetosome protein Mms5 (Magnetospirillum gryphiswaldense (strain DSM 6361 / JCM 21280 / NBRC 15271 / MSR-1)).